Consider the following 88-residue polypeptide: Small ribosomal subunit protein uS15 (88 aa).

This sequence belongs to the universal ribosomal protein uS15 family. As to quaternary structure, part of the 30S ribosomal subunit. Forms a bridge to the 50S subunit in the 70S ribosome, contacting the 23S rRNA.

One of the primary rRNA binding proteins, it binds directly to 16S rRNA where it helps nucleate assembly of the platform of the 30S subunit by binding and bridging several RNA helices of the 16S rRNA. Its function is as follows. Forms an intersubunit bridge (bridge B4) with the 23S rRNA of the 50S subunit in the ribosome. This chain is Small ribosomal subunit protein uS15, found in Trichlorobacter lovleyi (strain ATCC BAA-1151 / DSM 17278 / SZ) (Geobacter lovleyi).